The primary structure comprises 498 residues: N-succinylglutamate 5-semialdehyde dehydrogenase 1 (498 aa).

231 to 236 (GSSNTG) is an NAD(+) binding site. Catalysis depends on residues glutamate 254 and cysteine 288.

This sequence belongs to the aldehyde dehydrogenase family. AstD subfamily.

It carries out the reaction N-succinyl-L-glutamate 5-semialdehyde + NAD(+) + H2O = N-succinyl-L-glutamate + NADH + 2 H(+). The protein operates within amino-acid degradation; L-arginine degradation via AST pathway; L-glutamate and succinate from L-arginine: step 4/5. Functionally, catalyzes the NAD-dependent reduction of succinylglutamate semialdehyde into succinylglutamate. The chain is N-succinylglutamate 5-semialdehyde dehydrogenase 1 from Shewanella denitrificans (strain OS217 / ATCC BAA-1090 / DSM 15013).